Reading from the N-terminus, the 162-residue chain is Protein hcp1 (162 aa).

This sequence belongs to the hcp1 family. As to quaternary structure, hexamer. Three hcp1 monomers form two closely related hexameric rings with a 40 Angstrom internal diameter.

The protein localises to the secreted. In terms of biological role, required for assembly of the protein secretion apparatus HSI-I. Actively secreted during chronic infection of cystic fibrosis patients. In Pseudomonas aeruginosa (strain ATCC 15692 / DSM 22644 / CIP 104116 / JCM 14847 / LMG 12228 / 1C / PRS 101 / PAO1), this protein is Protein hcp1 (hcp1).